Reading from the N-terminus, the 3564-residue chain is Sushi, von Willebrand factor type A, EGF and pentraxin domain-containing protein 1 (3564 aa).

A signal peptide spans 1–17 (MWTRLAFCCWALALVSG). Residues 84–265 (ELVFLVDESS…LARRALHEDL (182 aa)) form the VWFA domain. N-linked (GlcNAc...) asparagine glycosylation is present at Asn-187. 3 Sushi domains span residues 377-436 (VHCP…FCRV), 437-496 (RTCP…RCVE), and 497-561 (RHCA…VCKD). Cystine bridges form between Cys-379-Cys-421, Cys-407-Cys-434, Cys-439-Cys-481, Cys-467-Cys-494, Cys-499-Cys-544, and Cys-530-Cys-559. HYR domains are found at residues 560–644 (KDVE…KVID) and 645–724 (VEPP…VIKG). The Sushi 4 domain occupies 725-789 (SPCEVPFTPV…YSTEWPDCAI (65 aa)). Disulfide bonds link Cys-727/Cys-769, Cys-753/Cys-787, Cys-1192/Cys-1203, Cys-1197/Cys-1212, Cys-1214/Cys-1223, Cys-1230/Cys-1241, Cys-1235/Cys-1250, Cys-1252/Cys-1261, Cys-1268/Cys-1279, Cys-1273/Cys-1288, Cys-1290/Cys-1299, Cys-1306/Cys-1317, Cys-1311/Cys-1326, Cys-1328/Cys-1337, Cys-1344/Cys-1355, Cys-1349/Cys-1364, Cys-1366/Cys-1375, Cys-1382/Cys-1393, Cys-1387/Cys-1402, and Cys-1404/Cys-1413. Residues 1188-1224 (VFHECFLNPCHNSGTCQQLGRGYVCLCPPGYTGLKCE) form the EGF-like 1 domain. Positions 1226 to 1262 (DIDECSSLPCLNGGICRDKVGGFTCECSSGYTGQICE) constitute an EGF-like 2; calcium-binding domain. Residues 1264–1300 (NINECSSSPCLNKGTCTDGLASYRCTCVSGYVGVHCE) enclose the EGF-like 3; calcium-binding domain. One can recognise an EGF-like 4; calcium-binding domain in the interval 1302–1338 (DVNECQSSPCLNNAVCKDQVGGFSCKCPPGFLGTRCE). An EGF-like 5; calcium-binding domain is found at 1340-1376 (NVDECLSQPCQNGATCKDGANSFRCQCPAGFTGPHCE). An EGF-like 6; calcium-binding domain is found at 1378-1414 (NINECQSNPCRNQATCVDELNSYSCKCRPGFSGRRCE). The Pentraxin (PTX) domain maps to 1419 to 1623 (SGFNLDFEVS…VKVDSSSIFC (205 aa)). Sushi domains are found at residues 1624 to 1682 (SDCP…HCER) and 1683 to 1740 (IRCG…SCLD). 35 disulfide bridges follow: Cys-1626–Cys-1667, Cys-1653–Cys-1680, Cys-1685–Cys-1725, Cys-1711–Cys-1738, Cys-1744–Cys-1756, Cys-1750–Cys-1765, Cys-1767–Cys-1778, Cys-1784–Cys-1824, Cys-1810–Cys-1837, Cys-1842–Cys-1882, Cys-1868–Cys-1895, Cys-1900–Cys-1940, Cys-1926–Cys-1953, Cys-1958–Cys-1998, Cys-1984–Cys-2011, Cys-2016–Cys-2056, Cys-2042–Cys-2073, Cys-2078–Cys-2121, Cys-2107–Cys-2136, Cys-2141–Cys-2181, Cys-2167–Cys-2194, Cys-2199–Cys-2240, Cys-2226–Cys-2254, Cys-2259–Cys-2299, Cys-2285–Cys-2313, Cys-2318–Cys-2358, Cys-2344–Cys-2371, Cys-2376–Cys-2417, Cys-2403–Cys-2430, Cys-2435–Cys-2475, Cys-2461–Cys-2488, Cys-2493–Cys-2533, Cys-2519–Cys-2546, Cys-2551–Cys-2591, and Cys-2577–Cys-2603. Residues 1740-1779 (DVDECAVGSDCSEHASCLNTNGSYICSCKPPYTGDGKNCA) enclose the EGF-like 7; calcium-binding domain. The N-linked (GlcNAc...) asparagine glycan is linked to Asn-1760. 14 Sushi domains span residues 1776-1839 (KNCA…SCEA), 1840-1897 (ISCG…VCEL), 1898-1955 (VKCS…SCQL), 1956-2013 (VSCG…QCLA), 2014-2075 (VSCD…RCIA), 2076-2138 (HFCE…QCIP), 2139-2196 (VRCG…TCHP), 2197-2256 (VSCN…SCTP), 2257-2315 (LNCG…KCVP), 2316-2373 (TKCA…VCKL), 2374-2432 (VLCQ…ECVP), 2433-2490 (VECP…MCRP), 2491-2548 (IECP…SCNA), and 2549-2605 (IHCS…TCVP). The interval 2634-2641 (DMMEVPYL) is important for the interaction with integrin ITGA9:ITGB1. Sushi domains are found at residues 2659 to 2708 (EESL…SCIS), 2709 to 2766 (IECD…RCEV), 2767 to 2824 (ISCS…VCLP), 2825 to 2882 (VDCG…SCVP), 2883 to 2940 (VRCP…ICKP), 2941 to 2998 (ATCG…SCLP), 2999 to 3054 (CTCS…LCEH), 3055 to 3112 (ADCG…TCEP), 3113 to 3171 (VSCG…NCSP), 3172 to 3231 (KTCP…SCIP), 3232 to 3289 (VVCG…VCRE), 3290 to 3347 (SRCE…LCKP), 3348 to 3406 (NPCP…RCEK), and 3407 to 3463 (ISCG…ICRA). Intrachain disulfides connect Cys-2679-Cys-2706, Cys-2711-Cys-2751, Cys-2737-Cys-2764, Cys-2769-Cys-2809, Cys-2795-Cys-2822, Cys-2827-Cys-2867, Cys-2853-Cys-2880, Cys-2885-Cys-2925, Cys-2911-Cys-2938, Cys-2943-Cys-2983, Cys-2969-Cys-2996, Cys-3001-Cys-3040, Cys-3026-Cys-3052, Cys-3057-Cys-3097, Cys-3083-Cys-3110, Cys-3115-Cys-3156, Cys-3141-Cys-3169, Cys-3174-Cys-3214, Cys-3200-Cys-3229, Cys-3234-Cys-3274, Cys-3260-Cys-3287, Cys-3292-Cys-3332, Cys-3318-Cys-3345, Cys-3350-Cys-3391, Cys-3377-Cys-3404, Cys-3409-Cys-3449, Cys-3435-Cys-3461, Cys-3497-Cys-3507, Cys-3501-Cys-3513, Cys-3515-Cys-3524, Cys-3529-Cys-3539, Cys-3533-Cys-3545, and Cys-3547-Cys-3556. EGF-like domains are found at residues 3493-3525 (EEPI…SRCH) and 3526-3557 (TATC…HDCS).

As to quaternary structure, interacts (via Sushi domain 21) with ITGA9:ITGB1; thereby inhibits Ca(2+) intracellular signaling and as a result represses vasocontraction. Interacts (via Sushi domain 21) with ITGA4:ITGB1; thereby inhibits Ca(2+) intracellular signaling and as a result represses vasocontraction. Interacts with ANGPT1 and ANGPT2. Interacts with PEAR1 (via extracellular domain). Interacts with HSPG2, TLN1, FN1, COPA, CCT2, IQGAP1, LAMC1 and NID1. Interacts (via C-terminus) with TIE1.

Its subcellular location is the secreted. The protein resides in the nucleus. The protein localises to the cytoplasm. It localises to the membrane. Required for morphological development, cell alignment and migration of lymphatic endothelial cells during embryonic development, potentially via modulation of ANGPT2-TIE1 signaling and subsequent activation of FOXC2 transcription. Required for embryonic lymphatic vascular development, via mediating the correct formation of the first lymphovenous contact site and tight association of the lymphatic endothelium with the venous endothelium. Represses PRKCA-mediated L-type voltage-gated channel Ca(2+) influx and ROCK-mediated calcium sensitivity in vascular smooth muscle cells, via its interaction with integrins, thereby inhibiting vasocontraction. Promotes platelet activation, via its interaction with PEAR1 and subsequent activation of AKT/mTOR signaling. Plays a role in epidermal development and keratinocyte differentiation, independent of cell-cell adhesion. May play a role in initial cell attachment of stromal osteogenic cells. May promote myoblast cell adhesion when in the presence of integrin ITGA9:ITGB1. This is Sushi, von Willebrand factor type A, EGF and pentraxin domain-containing protein 1 (Svep1) from Rattus norvegicus (Rat).